A 92-amino-acid polypeptide reads, in one-letter code: Small ribosomal subunit protein uS19 (92 aa).

This sequence belongs to the universal ribosomal protein uS19 family.

Protein S19 forms a complex with S13 that binds strongly to the 16S ribosomal RNA. The protein is Small ribosomal subunit protein uS19 of Rickettsia africae (strain ESF-5).